A 228-amino-acid polypeptide reads, in one-letter code: Cytidylate kinase (228 aa).

Residue 11–19 (GPASAGKST) participates in ATP binding.

This sequence belongs to the cytidylate kinase family. Type 1 subfamily.

It is found in the cytoplasm. It carries out the reaction CMP + ATP = CDP + ADP. It catalyses the reaction dCMP + ATP = dCDP + ADP. The polypeptide is Cytidylate kinase (Limosilactobacillus reuteri (strain DSM 20016) (Lactobacillus reuteri)).